We begin with the raw amino-acid sequence, 235 residues long: Centromere protein H (235 aa).

The interval 1 to 23 (MAGRLSESVGSGPGAEAETAADP) is disordered. Positions 125–145 (EIIQAHQQARVIRENLNDIRR) form a coiled coil.

This sequence belongs to the CENP-H/MCM16 family. Component of the CENPA-HI complex, at least composed of CENPH, CENPI, CENPK, CENPL, CENPM, CENPO and CENPP. Interacts with NDC80.

The protein localises to the nucleus. Its subcellular location is the chromosome. It localises to the centromere. It is found in the kinetochore. In terms of biological role, component of the CENPA-HI complex, a centromeric complex involved in assembly of kinetochore proteins, mitotic progression and chromosome segregation. Required for the localization of CENPC but not CENPA to the centromere. It however may be involved in incorporation of newly synthesized CENPA into centromeres via its interaction with the CENPA-NAC complex. This chain is Centromere protein H (CENPH), found in Gallus gallus (Chicken).